The sequence spans 102 residues: Small ribosomal subunit protein uS10 (102 aa).

The protein belongs to the universal ribosomal protein uS10 family. As to quaternary structure, part of the 30S ribosomal subunit.

Involved in the binding of tRNA to the ribosomes. The sequence is that of Small ribosomal subunit protein uS10 from Myxococcus xanthus (strain DK1622).